The primary structure comprises 486 residues: Protein DETOXIFICATION 53 (486 aa).

12 helical membrane-spanning segments follow: residues 15–35 (CPIV…MWFL), 45–65 (GGAL…KGLS), 94–114 (LLIV…PIFL), 130–150 (MLFF…RTFL), 159–179 (LTIS…VFVV), 187–207 (GVAI…LVYT), 240–260 (AISV…CGLL), 267–287 (VAAM…PFAI), 312–332 (VIGL…VTAL), 346–366 (ILGL…GNSP), 386–406 (VNLC…TFGF), and 413–433 (LWFG…YTLI). The disordered stretch occupies residues 448–474 (TSAAADKSHSEDETVHAEVQDDDDVSS). Positions 453–466 (DKSHSEDETVHAEV) are enriched in basic and acidic residues.

It belongs to the multi antimicrobial extrusion (MATE) (TC 2.A.66.1) family.

It localises to the membrane. This Arabidopsis thaliana (Mouse-ear cress) protein is Protein DETOXIFICATION 53.